The following is a 93-amino-acid chain: Beta-defensin 128 (93 aa).

The first 18 residues, 1–18 (MKLFLVLIILLFEVLTDG), serve as a signal peptide directing secretion. Disulfide bonds link C24-C52, C32-C46, and C36-C53.

Belongs to the beta-defensin family.

Its subcellular location is the secreted. Has antibacterial activity. This is Beta-defensin 128 (DEFB128) from Homo sapiens (Human).